A 184-amino-acid chain; its full sequence is ATP synthase subunit b, chloroplastic (184 aa).

Residues 27–49 traverse the membrane as a helical segment; the sequence is LATNPINLSVVLGVLIFFGKGVL.

The protein belongs to the ATPase B chain family. As to quaternary structure, F-type ATPases have 2 components, F(1) - the catalytic core - and F(0) - the membrane proton channel. F(1) has five subunits: alpha(3), beta(3), gamma(1), delta(1), epsilon(1). F(0) has four main subunits: a(1), b(1), b'(1) and c(10-14). The alpha and beta chains form an alternating ring which encloses part of the gamma chain. F(1) is attached to F(0) by a central stalk formed by the gamma and epsilon chains, while a peripheral stalk is formed by the delta, b and b' chains.

It is found in the plastid. The protein resides in the chloroplast thylakoid membrane. In terms of biological role, f(1)F(0) ATP synthase produces ATP from ADP in the presence of a proton or sodium gradient. F-type ATPases consist of two structural domains, F(1) containing the extramembraneous catalytic core and F(0) containing the membrane proton channel, linked together by a central stalk and a peripheral stalk. During catalysis, ATP synthesis in the catalytic domain of F(1) is coupled via a rotary mechanism of the central stalk subunits to proton translocation. Component of the F(0) channel, it forms part of the peripheral stalk, linking F(1) to F(0). This is ATP synthase subunit b, chloroplastic from Cucumis sativus (Cucumber).